Here is a 261-residue protein sequence, read N- to C-terminus: Transmembrane protein 106A (261 aa).

Polar residues predominate over residues 1-10 (MGKAFSQLTS). Positions 1–22 (MGKAFSQLTSQKDEDKSILPDN) are disordered. Residues 93–113 (LSVFLAVTICLLIFSLTIFFL) traverse the membrane as a helical segment.

Belongs to the TMEM106 family.

It is found in the cell membrane. Activates macrophages and polarizes them into M1-like macrophages through the activation of the MAPK and NF-kappaB signaling pathway. Upon activation, up-regulates the expression of CD80, CD86, CD69 and MHC II on macrophages, and induces the release of pro-inflammatory cytokines such as TNF, IL1B, IL6, CCL2 and nitric oxide. May play a role in inhibition of proliferation and migration. In Rattus norvegicus (Rat), this protein is Transmembrane protein 106A (Tmem106a).